We begin with the raw amino-acid sequence, 78 residues long: Large ribosomal subunit protein bL28 (78 aa).

Residues Met1–Arg27 are disordered.

This sequence belongs to the bacterial ribosomal protein bL28 family.

The protein is Large ribosomal subunit protein bL28 of Corynebacterium kroppenstedtii (strain DSM 44385 / JCM 11950 / CIP 105744 / CCUG 35717).